Consider the following 391-residue polypeptide: tRNA-specific 2-thiouridylase MnmA (391 aa).

ATP is bound by residues Gly-35 to Ser-42 and Leu-61. Cys-122 acts as the Nucleophile in catalysis. Cysteines 122 and 221 form a disulfide. ATP is bound at residue Gly-147. The interaction with tRNA stretch occupies residues Lys-171 to Gln-173. Cys-221 (cysteine persulfide intermediate) is an active-site residue. An interaction with tRNA region spans residues Arg-328 to Tyr-329.

The protein belongs to the MnmA/TRMU family.

Its subcellular location is the cytoplasm. It catalyses the reaction S-sulfanyl-L-cysteinyl-[protein] + uridine(34) in tRNA + AH2 + ATP = 2-thiouridine(34) in tRNA + L-cysteinyl-[protein] + A + AMP + diphosphate + H(+). In terms of biological role, catalyzes the 2-thiolation of uridine at the wobble position (U34) of tRNA, leading to the formation of s(2)U34. The sequence is that of tRNA-specific 2-thiouridylase MnmA from Synechococcus sp. (strain CC9311).